The sequence spans 470 residues: 6-phospho-beta-galactosidase 1 (470 aa).

5 residues coordinate D-galactose 6-phosphate: Gln-23, His-120, Asn-163, Glu-164, and Asn-300. Glu-164 (proton donor) is an active-site residue. Catalysis depends on Glu-378, which acts as the Nucleophile. D-galactose 6-phosphate is bound by residues Ser-434, Trp-435, Lys-441, and Tyr-443.

It belongs to the glycosyl hydrolase 1 family.

The catalysed reaction is a 6-phospho-beta-D-galactoside + H2O = D-galactose 6-phosphate + an alcohol. Its pathway is carbohydrate metabolism; lactose degradation; D-galactose 6-phosphate and beta-D-glucose from lactose 6-phosphate: step 1/1. The polypeptide is 6-phospho-beta-galactosidase 1 (Streptococcus pneumoniae serotype 4 (strain ATCC BAA-334 / TIGR4)).